The sequence spans 370 residues: 4-hydroxy-3-methylbut-2-en-1-yl diphosphate synthase (flavodoxin) (370 aa).

Residues Cys-268, Cys-271, Cys-303, and Glu-310 each coordinate [4Fe-4S] cluster.

It belongs to the IspG family. The cofactor is [4Fe-4S] cluster.

The enzyme catalyses (2E)-4-hydroxy-3-methylbut-2-enyl diphosphate + oxidized [flavodoxin] + H2O + 2 H(+) = 2-C-methyl-D-erythritol 2,4-cyclic diphosphate + reduced [flavodoxin]. It participates in isoprenoid biosynthesis; isopentenyl diphosphate biosynthesis via DXP pathway; isopentenyl diphosphate from 1-deoxy-D-xylulose 5-phosphate: step 5/6. Functionally, converts 2C-methyl-D-erythritol 2,4-cyclodiphosphate (ME-2,4cPP) into 1-hydroxy-2-methyl-2-(E)-butenyl 4-diphosphate. This chain is 4-hydroxy-3-methylbut-2-en-1-yl diphosphate synthase (flavodoxin), found in Bacillus licheniformis (strain ATCC 14580 / DSM 13 / JCM 2505 / CCUG 7422 / NBRC 12200 / NCIMB 9375 / NCTC 10341 / NRRL NRS-1264 / Gibson 46).